Here is a 369-residue protein sequence, read N- to C-terminus: Putative cyclin-F1-1 (369 aa).

A disordered region spans residues 328-350 (AQHHLESKPAGAAGVGINSSGDD).

The protein belongs to the cyclin family. Cyclin F subfamily.

The sequence is that of Putative cyclin-F1-1 (CYCF1-1) from Oryza sativa subsp. japonica (Rice).